Here is a 658-residue protein sequence, read N- to C-terminus: Endoglucanase 3 (658 aa).

A signal peptide spans 1 to 23; it reads MQLKNFYPKMSVLGIATVMALTA. Cys-24 is lipidated: N-palmitoyl cysteine. A lipid anchor (S-diacylglycerol cysteine) is attached at Cys-24. Positions 24-265 are excised as a propeptide; sequence CGDENTQALF…TDSLFIDNIY (242 aa). Residues 42–83 are disordered; that stretch reads ENQVPVSSSDMSPTSSDAVIDPTSSSAAVVDPSTLPAEGPIT. The segment covering 45–58 has biased composition (low complexity); that stretch reads VPVSSSDMSPTSSD. Residues 87-277 form the CBM11 domain; it reads GLGTLVDDFE…DSSEVEKDQP (191 aa). The active-site Proton donor is Glu-448. The active-site Nucleophile is Glu-597.

Belongs to the glycosyl hydrolase 5 (cellulase A) family. Monomer. May be a lipoprotein and may be glycosylated.

The protein resides in the membrane. The catalysed reaction is Endohydrolysis of (1-&gt;4)-beta-D-glucosidic linkages in cellulose, lichenin and cereal beta-D-glucans.. Functionally, exhibits both endoglucanase and cellobiosidase activities. This chain is Endoglucanase 3 (cel-3), found in Fibrobacter succinogenes (strain ATCC 19169 / S85).